Here is a 1054-residue protein sequence, read N- to C-terminus: Proteoglycan 4 (1054 aa).

The signal sequence occupies residues 1-24 (MGWKILPVCLSLLLPVVLIQQVSS). 2 SMB domains span residues 26-69 (DLSS…PELS) and 66-108 (PELS…EEVH). 14 disulfides stabilise this stretch: cysteine 30–cysteine 34, cysteine 30–cysteine 46, cysteine 34–cysteine 64, cysteine 44–cysteine 46, cysteine 44–cysteine 57, cysteine 50–cysteine 56, cysteine 57–cysteine 64, cysteine 70–cysteine 74, cysteine 70–cysteine 86, cysteine 74–cysteine 104, cysteine 84–cysteine 86, cysteine 84–cysteine 97, cysteine 90–cysteine 96, and cysteine 97–cysteine 104. Asparagine 109 carries an N-linked (GlcNAc...) asparagine glycan. Residues 110–125 (STSPSSKTAPTPAGAS) are compositionally biased toward low complexity. Residues 110 to 764 (STSPSSKTAP…PLIPGPPVLF (655 aa)) form a disordered region. Serine 135 carries O-linked (GalNAc...) serine glycosylation. The span at 162-175 (QESSSSSSSSSSTI) shows a compositional bias: low complexity. Over residues 188–200 (ELQKNPNVKDNKK) the composition is skewed to basic and acidic residues. The span at 229–238 (TPPPPDPPTT) shows a compositional bias: pro residues. Threonine 237 and threonine 250 each carry an O-linked (GalNAc...) threonine glycan. Low complexity predominate over residues 286 to 295 (TTATNKQSSA). A glycan (O-linked (GalNAc...) threonine) is linked at threonine 301. A glycan (O-linked (GalNAc...) serine) is linked at serine 302. The span at 302-318 (SVKETRSAEKTSDKDVE) shows a compositional bias: basic and acidic residues. O-linked (GalNAc...) threonine glycosylation occurs at threonine 306. Serine 313 carries an O-linked (GalNAc...) serine glycan. Residues 317–324 (VEPTSTTP) form a 1; approximate repeat. Residues 317 to 618 (VEPTSTTPKN…TPKKPEPTTT (302 aa)) form a 37 X 8 AA repeats of K-X-P-X-P-T-T-X region. The span at 319–328 (PTSTTPKNSA) shows a compositional bias: polar residues. The 2; approximate repeat unit spans residues 325-332 (KNSAPTTT). O-linked (GalNAc...) serine glycosylation is present at serine 327. Residues 329 to 339 (PTTTKKPVTTT) show a composition bias toward low complexity. 11 O-linked (GalNAc...) threonine glycosylation sites follow: threonine 330, threonine 338, threonine 354, threonine 362, threonine 369, threonine 377, threonine 378, threonine 385, threonine 386, threonine 393, and threonine 394. A 3; approximate repeat occupies 333–340 (KKPVTTTK). Residues 349 to 356 (QEPEPTTA) form a 4; approximate repeat. Residues 357–364 (KEPPPTTK) form repeat 5. A compositionally biased stretch (basic and acidic residues) spans 364–399 (KKPEPTTRKEPEPTTPKEPEPTTPKEPEPTTPKEPE). Residues 365–371 (KPEPTTR) form a 6; approximate repeat. 5 consecutive repeat copies span residues 372–379 (KEPEPTTP), 380–387 (KEPEPTTP), 388–395 (KEPEPTTP), 396–403 (KEPEPTTP), and 404–411 (KEPPPTTK). Residues 400 to 426 (PTTPKEPPPTTKKPEPTTPKEPGPTTP) show a composition bias toward pro residues. A 12; approximate repeat occupies 412–418 (KPEPTTP). O-linked (GalNAc...) threonine glycosylation is found at threonine 416, threonine 417, threonine 424, threonine 432, threonine 433, threonine 440, threonine 441, and threonine 448. Repeat copies occupy residues 419 to 426 (KEPGPTTP), 427 to 434 (KEPEPTTT), and 435 to 442 (KEPEPTTT). A compositionally biased stretch (basic and acidic residues) spans 427-550 (KEPEPTTTKE…PEPTTPKKPE (124 aa)). One copy of the 16; approximate repeat lies at 443–450 (KEPESTTR). Tandem repeats lie at residues 451–458 (KEPEPTTP), 459–466 (KEPEPTTP), 467–474 (KEPEPTTL), 475–482 (KEPEPTTP), 483–490 (KEPEPTTP), 491–498 (KEPEPTTP), 499–506 (KEPEPTTP), 507–514 (KEPEPTTP), 515–522 (KEPEPTTP), 523–530 (KEPEPTTP), 531–538 (KEPEPTTP), 539–546 (KEPEPTTP), 547–554 (KKPEPTTP), 555–562 (KEPVPTTP), 563–570 (KEPEPTTP), 571–578 (KEPEPTTP), 579–586 (KEPEPTTR), 587–594 (KEPEPTTP), 595–602 (KEPEPTTP), 603–610 (KEPEPTTP), and 611–618 (KKPEPTTT). Residues threonine 472, threonine 480, threonine 481, threonine 488, threonine 489, threonine 496, threonine 497, threonine 504, threonine 505, threonine 512, threonine 520, threonine 521, threonine 528, and threonine 529 are each glycosylated (O-linked (GalNAc...) threonine). The span at 551–562 (PTTPKEPVPTTP) shows a compositional bias: pro residues. Threonine 553, threonine 560, threonine 561, threonine 568, threonine 569, threonine 576, and threonine 577 each carry an O-linked (GalNAc...) threonine glycan. Positions 563–614 (KEPEPTTPKEPEPTTPKEPEPTTRKEPEPTTPKEPEPTTPKEPEPTTPKKPE) are enriched in basic and acidic residues. 3 O-linked (GalNAc...) threonine glycosylation sites follow: threonine 592, threonine 600, and threonine 601. A compositionally biased stretch (low complexity) spans 615–624 (PTTTSPKTTT). Threonine 622, threonine 624, threonine 628, threonine 629, and threonine 692 each carry an O-linked (GalNAc...) threonine glycan. Residues 672-699 (KPTKKPTKAPKKPTSTKKPKTPKTRKPK) are compositionally biased toward basic residues. Low complexity predominate over residues 700 to 712 (TTPSPLKTTSATP). Over residues 713 to 735 (ELNTTPLEVMLPTTTIPKQTPNP) the composition is skewed to polar residues. Residues cysteine 795 and cysteine 1053 are joined by a disulfide bond. Hemopexin repeat units follow at residues 797-840 (GKPV…VWGI) and 841-888 (PSPI…FGGL). Asparagine 808 carries N-linked (GlcNAc...) asparagine glycosylation. Threonine 810 carries O-linked (GalNAc...) threonine glycosylation. The N-linked (GlcNAc...) asparagine glycan is linked to asparagine 938.

In terms of assembly, homodimer; disulfide-linked. N-glycosylated. In terms of processing, O-glycosylated; contains glycosaminoglycan chondroitin sulfate and keratan sulfate. O-glycosylated with sialylated oligosaccharides which are predominantly represented by the monosialylated core type I structure, NeuNAcalpha2-3Galbeta1-3GalNAc, with smaller amounts of disialylated O-glycans. Post-translationally, the disulfide bond between Cys-795 and Cys-1053 is essential for protein cleavage. Proteolytically cleaved by cathepsin CTSG. Highly expressed in cartilage, bone and liver and weakly expressed in heart, brain and muscle. Expressed in the surface chondrocytes and in synovial intimal cells. Isoform B is expressed in bone, small intestine, muscle, testis, heart, liver and lung. Isoform C and isoform D are widely expressed.

It is found in the secreted. In terms of biological role, plays a role in boundary lubrication within articulating joints. Prevents protein deposition onto cartilage from synovial fluid by controlling adhesion-dependent synovial growth and inhibiting the adhesion of synovial cells to the cartilage surface. The protein is Proteoglycan 4 (Prg4) of Mus musculus (Mouse).